A 535-amino-acid chain; its full sequence is T-complex protein 1 subunit zeta (535 aa).

This sequence belongs to the TCP-1 chaperonin family. In terms of assembly, heterooligomeric complex of about 850 to 900 kDa that forms two stacked rings, 12 to 16 nm in diameter.

It localises to the cytoplasm. Functionally, molecular chaperone; assists the folding of proteins upon ATP hydrolysis. Known to play a role, in vitro, in the folding of actin and tubulin. The sequence is that of T-complex protein 1 subunit zeta (cct6) from Schizosaccharomyces pombe (strain 972 / ATCC 24843) (Fission yeast).